Here is a 499-residue protein sequence, read N- to C-terminus: Cytochrome P450 81Q32 (499 aa).

The chain crosses the membrane as a helical span at residues 5-25 (TLLYTFLAVVLLSISLKLFPV). Residues N112, N183, and N266 are each glycosylated (N-linked (GlcNAc...) asparagine). C434 contributes to the heme binding site.

Belongs to the cytochrome P450 family. Expressed in leaf epidermis and in the leaf internal phloem-associated parenchyma (IPAP) inside the mesophyll.

It is found in the membrane. This chain is Cytochrome P450 81Q32, found in Catharanthus roseus (Madagascar periwinkle).